Consider the following 629-residue polypeptide: Leucine-rich repeat protein soc-2 homolog (629 aa).

Residues 1-19 are compositionally biased toward low complexity; the sequence is MNLCSSGATASTTSLSSTG. Residues 1 to 133 are disordered; sequence MNLCSSGATA…PTTKKSKPIQ (133 aa). The span at 21–45 shows a compositional bias: gly residues; the sequence is RNGGTSEGGGEGAGGGGGSGGGGGN. LRR repeat units follow at residues 149–170, 172–193, 195–217, 218–239, 241–262, 264–285, 287–308, 310–331, 333–355, 356–377, 380–401, 404–425, 428–449, 451–472, 474–495, 497–518, 520–541, 543–564, 566–588, and 590–611; these read GIKR…VKEC, HLTE…IGCL, NLRN…QNCK, QLKV…IYRL, TLTT…LRQL, NLTM…IGAL, NLTT…IGNC, NLSA…IGNL, SLVR…KNCK, SMDE…MLAS, GLTT…GPAQ, NVYS…IFSR, GLTK…IGTW, NMVE…IMNL, NLEI…IGNM, KLRI…IGLL, ELQR…IGHL, NLTH…IGSL, GLEN…LALC, and NLKY…IQAG.

Belongs to the SHOC2 family.

In terms of biological role, acts as a Ras effector and participates in MAPK pathway activation. Probably acts as a regulatory subunit of protein phosphatase that specifically dephosphorylates Raf kinase and stimulate Raf activity at specialized signaling complexes upon Ras activation. This Drosophila pseudoobscura pseudoobscura (Fruit fly) protein is Leucine-rich repeat protein soc-2 homolog (Sur-8).